The sequence spans 35 residues: Photosystem II reaction center protein M (35 aa).

Residues 7–27 form a helical membrane-spanning segment; it reads GFIATILFVLVPTVFLLILYI.

The protein belongs to the PsbM family. As to quaternary structure, PSII is composed of 1 copy each of membrane proteins PsbA, PsbB, PsbC, PsbD, PsbE, PsbF, PsbH, PsbI, PsbJ, PsbK, PsbL, PsbM, PsbT, PsbX, PsbY, PsbZ, Psb30/Ycf12, peripheral proteins PsbO, CyanoQ (PsbQ), PsbU, PsbV and a large number of cofactors. It forms dimeric complexes.

The protein resides in the cellular thylakoid membrane. One of the components of the core complex of photosystem II (PSII). PSII is a light-driven water:plastoquinone oxidoreductase that uses light energy to abstract electrons from H(2)O, generating O(2) and a proton gradient subsequently used for ATP formation. It consists of a core antenna complex that captures photons, and an electron transfer chain that converts photonic excitation into a charge separation. This subunit is found at the monomer-monomer interface. This chain is Photosystem II reaction center protein M, found in Gloeothece citriformis (strain PCC 7424) (Cyanothece sp. (strain PCC 7424)).